The sequence spans 212 residues: UPF0319 protein PBPRA2789 (212 aa).

An N-terminal signal peptide occupies residues 1-21 (MKKILLAFTLPLVLASQTAMA).

The protein belongs to the UPF0319 family.

The polypeptide is UPF0319 protein PBPRA2789 (Photobacterium profundum (strain SS9)).